The following is a 329-amino-acid chain: Ribosomal RNA small subunit methyltransferase H (329 aa).

S-adenosyl-L-methionine is bound by residues 34–36 (GGY), D52, F79, D100, and Q107. Residues 285 to 329 (GEDEVAHNPRARSAKLRAAERTSAPAHKDDQSSSWPRLSDVMRGG) form a disordered region.

It belongs to the methyltransferase superfamily. RsmH family.

It is found in the cytoplasm. The catalysed reaction is cytidine(1402) in 16S rRNA + S-adenosyl-L-methionine = N(4)-methylcytidine(1402) in 16S rRNA + S-adenosyl-L-homocysteine + H(+). Functionally, specifically methylates the N4 position of cytidine in position 1402 (C1402) of 16S rRNA. The sequence is that of Ribosomal RNA small subunit methyltransferase H from Bradyrhizobium diazoefficiens (strain JCM 10833 / BCRC 13528 / IAM 13628 / NBRC 14792 / USDA 110).